Here is a 334-residue protein sequence, read N- to C-terminus: Phospho-N-acetylmuramoyl-pentapeptide-transferase (334 aa).

Transmembrane regions (helical) follow at residues 5–25 (VVWLAAGISFLVTLVLGPVTI), 52–72 (PTMGGIMFLIGIAVAGAVLLV), 81–101 (GLVVLAVTLGYGLIGFLDDFI), 116–136 (KILGQLVFATVLAVVAVFKLG), 148–168 (GISFDLGWWPFFFLTLFVLLG), 181–200 (GLASGATVFTATAFAILALV), 230–250 (VFMGDTGSLALGGALGAGAVV), 256–276 (LLVVIGGLYVLETLSVIIQVI), and 309–329 (FWLLSFLFSLVGLLGAQDFWL).

It belongs to the glycosyltransferase 4 family. MraY subfamily. It depends on Mg(2+) as a cofactor.

Its subcellular location is the cell membrane. It carries out the reaction UDP-N-acetyl-alpha-D-muramoyl-L-alanyl-gamma-D-glutamyl-meso-2,6-diaminopimeloyl-D-alanyl-D-alanine + di-trans,octa-cis-undecaprenyl phosphate = di-trans,octa-cis-undecaprenyl diphospho-N-acetyl-alpha-D-muramoyl-L-alanyl-D-glutamyl-meso-2,6-diaminopimeloyl-D-alanyl-D-alanine + UMP. It participates in cell wall biogenesis; peptidoglycan biosynthesis. Its function is as follows. Catalyzes the initial step of the lipid cycle reactions in the biosynthesis of the cell wall peptidoglycan: transfers peptidoglycan precursor phospho-MurNAc-pentapeptide from UDP-MurNAc-pentapeptide onto the lipid carrier undecaprenyl phosphate, yielding undecaprenyl-pyrophosphoryl-MurNAc-pentapeptide, known as lipid I. The protein is Phospho-N-acetylmuramoyl-pentapeptide-transferase of Desulforamulus reducens (strain ATCC BAA-1160 / DSM 100696 / MI-1) (Desulfotomaculum reducens).